Here is a 237-residue protein sequence, read N- to C-terminus: ATP synthase subunit a (237 aa).

The next 4 membrane-spanning stretches (helical) occupy residues 17–37 (LSDM…AVAA), 78–98 (LGVT…PFWL), 178–198 (ILLG…CGSI), and 201–221 (MVIM…AFIF).

Belongs to the ATPase A chain family. F-type ATPases have 2 components, CF(1) - the catalytic core - and CF(0) - the membrane proton channel. CF(1) has five subunits: alpha(3), beta(3), gamma(1), delta(1), epsilon(1). CF(0) has three main subunits: a(1), b(2) and c(9-12). The alpha and beta chains form an alternating ring which encloses part of the gamma chain. CF(1) is attached to CF(0) by a central stalk formed by the gamma and epsilon chains, while a peripheral stalk is formed by the delta and b chains.

The protein resides in the cell membrane. Functionally, key component of the proton channel; it plays a direct role in the translocation of protons across the membrane. This Bacillus caldotenax protein is ATP synthase subunit a.